Here is a 102-residue protein sequence, read N- to C-terminus: EPIDERMAL PATTERNING FACTOR-like protein 9 (102 aa).

The first 31 residues, 1–31, serve as a signal peptide directing secretion; sequence MKHEMMNIKPRCITIFFLLFALLLGNYVVQA. Disulfide bonds link cysteine 65–cysteine 98, cysteine 70–cysteine 77, and cysteine 73–cysteine 100.

It belongs to the plant cysteine rich small secretory peptide family. Epidermal patterning factor subfamily. In terms of assembly, interacts with ERECTA and TMM. In terms of tissue distribution, expressed in immature organs, including leaves, stems and flower buds, but not in roots, shoot apical meristem and petals. Detected in the mesophyll tissues but not in the epidermal tissues where stomata develop.

It is found in the secreted. The protein localises to the extracellular space. It localises to the apoplast. Its function is as follows. Positively regulates stomatal density and patterning. Acts by competing with EPF2 (AC Q8LC53) for the same receptors, ERECTA (AC Q42371) and TMM (AC Q9SSD1). Not cleaved by the protease CRSP (AC Q9LNU1). This Arabidopsis thaliana (Mouse-ear cress) protein is EPIDERMAL PATTERNING FACTOR-like protein 9.